Here is a 560-residue protein sequence, read N- to C-terminus: Trafficking protein particle complex II-specific subunit 65 (560 aa).

A disordered region spans residues 164–193 (SSKNTNNHLEKNNRATHRVSSKNSEVHEAD). Residues serine 393 and serine 398 each carry the phosphoserine modification.

In terms of assembly, part of the multisubunit TRAPP (transport protein particle) II complex composed of BET3, BET5, TRS20, TRS23, TRS31, TRS33, TRS65, TRS120 and TRS130. Interacts directly with TRS120 and TRS130.

The protein resides in the cytoplasm. Its subcellular location is the golgi apparatus. It is found in the cis-Golgi network. The protein operates within glycan metabolism; beta-glucan biosynthesis. Its function is as follows. Specific subunit of the TRAPP II complex, a highly conserved vesicle tethering complex that functions in the late Golgi as a guanine nucleotide exchanger (GEF) for the Golgi YPT1 GTPase. TRS65 plays a role in the YPT GEF activity of TRAPP II in concert with the two other TRAPP II-specific subunits TRS120 and TRS130. Involved in cell wall (1--&gt;6)-beta-glucan synthesis. In Saccharomyces cerevisiae (strain ATCC 204508 / S288c) (Baker's yeast), this protein is Trafficking protein particle complex II-specific subunit 65 (TRS65).